The sequence spans 155 residues: Protein-export protein SecB (155 aa).

It belongs to the SecB family. Homotetramer, a dimer of dimers. One homotetramer interacts with 1 SecA dimer.

It localises to the cytoplasm. Functionally, one of the proteins required for the normal export of preproteins out of the cell cytoplasm. It is a molecular chaperone that binds to a subset of precursor proteins, maintaining them in a translocation-competent state. It also specifically binds to its receptor SecA. The chain is Protein-export protein SecB from Klebsiella pneumoniae subsp. pneumoniae (strain ATCC 700721 / MGH 78578).